The following is a 145-amino-acid chain: Salt stress-induced protein (145 aa).

In terms of domain architecture, Jacalin-type lectin spans 3 to 145; the sequence is LVKIGLWGGN…IDAIGIYVHP (143 aa). Tandem repeats lie at residues 6–15 and 54–64. Residues 6–64 form a 2 X approximate repeats, Gly-rich region; the sequence is IGLWGGNGGSAQDISVPPKKLLGVTIYSSDAIRSIAFNYIGVDGQEYAIGPWGGGEGTS.

In terms of tissue distribution, sheaths and roots from mature plants and seedlings.

The protein is Salt stress-induced protein (SALT) of Oryza sativa subsp. indica (Rice).